The sequence spans 143 residues: Small ribosomal subunit protein bS6 (143 aa).

The segment at 100 to 143 (QSFIMKSKDDKGDKPERRRRDDDESGDVGVSNDSDNDGGNAEAA) is disordered. Basic and acidic residues predominate over residues 105–121 (KSKDDKGDKPERRRRDD). Low complexity predominate over residues 126-143 (DVGVSNDSDNDGGNAEAA).

It belongs to the bacterial ribosomal protein bS6 family.

Functionally, binds together with bS18 to 16S ribosomal RNA. This is Small ribosomal subunit protein bS6 from Xylella fastidiosa (strain M12).